Consider the following 258-residue polypeptide: 4-hydroxy-tetrahydrodipicolinate reductase (258 aa).

Residues 8-13 (GVTGRM), 93-95 (GTT), and 117-120 (AANF) each bind NAD(+). Catalysis depends on His-149, which acts as the Proton donor/acceptor. His-150 provides a ligand contact to (S)-2,3,4,5-tetrahydrodipicolinate. Lys-153 (proton donor) is an active-site residue. 159–160 (GT) is a binding site for (S)-2,3,4,5-tetrahydrodipicolinate.

Belongs to the DapB family.

It is found in the cytoplasm. The enzyme catalyses (S)-2,3,4,5-tetrahydrodipicolinate + NAD(+) + H2O = (2S,4S)-4-hydroxy-2,3,4,5-tetrahydrodipicolinate + NADH + H(+). It carries out the reaction (S)-2,3,4,5-tetrahydrodipicolinate + NADP(+) + H2O = (2S,4S)-4-hydroxy-2,3,4,5-tetrahydrodipicolinate + NADPH + H(+). The protein operates within amino-acid biosynthesis; L-lysine biosynthesis via DAP pathway; (S)-tetrahydrodipicolinate from L-aspartate: step 4/4. Functionally, catalyzes the conversion of 4-hydroxy-tetrahydrodipicolinate (HTPA) to tetrahydrodipicolinate. In Thermomicrobium roseum (strain ATCC 27502 / DSM 5159 / P-2), this protein is 4-hydroxy-tetrahydrodipicolinate reductase.